Reading from the N-terminus, the 339-residue chain is Deubiquitinase and deneddylase Dub2 (339 aa).

Residues 36-56 traverse the membrane as a helical segment; it reads IIIALFLIVISCGLILCAYTF. Catalysis depends on residues H203, D220, and C282.

The protein belongs to the peptidase C48 family.

It localises to the secreted. Its subcellular location is the host cell. The protein localises to the membrane. Functionally, effector proteins function to alter host cell physiology and promote bacterial survival in host tissues. This protease possesses deubiquitinating and deneddylating activities. This chain is Deubiquitinase and deneddylase Dub2 (cdu2), found in Chlamydia trachomatis serovar L2 (strain ATCC VR-902B / DSM 19102 / 434/Bu).